The sequence spans 194 residues: Ras-related protein Rab-22A (194 aa).

Position 12–20 (12–20 (GDTGVGKSS)) interacts with GTP. The short motif at 34–42 (INPTIGASF) is the Effector region element. GTP-binding positions include 60-64 (DTAGQ), 118-121 (NKCD), and 148-150 (SAK). A disordered region spans residues 174 to 194 (PSGGKGFKLRRQPSEPKRSCC). Basic and acidic residues predominate over residues 185–194 (QPSEPKRSCC). Residues C193 and C194 are each lipidated (S-geranylgeranyl cysteine).

This sequence belongs to the small GTPase superfamily. Rab family. As to quaternary structure, interacts directly with ZFYVE20. Binds EEA1. Interacts (in its GTP-bound form) with RABGEF1. Interacts (in its GTP-bound form) with RINL.

It is found in the endosome membrane. The protein resides in the cell membrane. It localises to the early endosome. Its subcellular location is the late endosome. The protein localises to the cell projection. It is found in the ruffle. The protein resides in the cytoplasmic vesicle. It localises to the phagosome. Its subcellular location is the phagosome membrane. Its function is as follows. Plays a role in endocytosis and intracellular protein transport. Mediates trafficking of TF from early endosomes to recycling endosomes. Required for NGF-mediated endocytosis of NTRK1, and subsequent neurite outgrowth. Binds GTP and GDP and has low GTPase activity. Alternates between a GTP-bound active form and a GDP-bound inactive form. The polypeptide is Ras-related protein Rab-22A (RAB22A) (Homo sapiens (Human)).